We begin with the raw amino-acid sequence, 186 residues long: MEEINLYLDDAKDSMQKAIKHTELELSKIRAGKASPNMFDGIMVDYYGSSTPLAQVATVSVPEPRSITIKAYEKSMVTTIEKAIRDANMGFNPQNDGDVIRINVPPLTEERRRDLVKQTKAEGESGKVRIRKIRQETNDELKKLLKDGASEDEVKRAEEVVQALTNDTSAKLEALIAAKEKELMTV.

This sequence belongs to the RRF family.

It localises to the cytoplasm. Responsible for the release of ribosomes from messenger RNA at the termination of protein biosynthesis. May increase the efficiency of translation by recycling ribosomes from one round of translation to another. This is Ribosome-recycling factor from Cytophaga hutchinsonii (strain ATCC 33406 / DSM 1761 / CIP 103989 / NBRC 15051 / NCIMB 9469 / D465).